A 473-amino-acid polypeptide reads, in one-letter code: Glutamine synthetase (473 aa).

Residues 18-102 enclose the GS beta-grasp domain; that stretch reads NNIKWVDLQF…VLTKVFWGGG (85 aa). Residues 110–473 form the GS catalytic domain; it reads PRGIAEEAEK…PMEIYQYLDS (364 aa). E133 and E135 together coordinate Mg(2+). Residue E207 participates in ATP binding. Mg(2+) is bound by residues E212 and E220. Residues 264-265 and G265 contribute to the L-glutamate site; that span reads NG. H269 serves as a coordination point for Mg(2+). ATP contacts are provided by residues 271–273 and S273; that span reads HFS. 3 residues coordinate L-glutamate: R324, E330, and R342. Positions 342, 347, and 357 each coordinate ATP. E362 serves as a coordination point for Mg(2+). R364 is a binding site for L-glutamate.

Belongs to the glutamine synthetase family. As to quaternary structure, oligomer of 12 subunits arranged in the form of two hexagons. Mg(2+) serves as cofactor. Requires Mn(2+) as cofactor.

The protein localises to the cytoplasm. It carries out the reaction L-glutamate + NH4(+) + ATP = L-glutamine + ADP + phosphate + H(+). Its activity is regulated as follows. Strongly inhibited by glycine and L-alanine. AMP at 10 mM displays a very weak inhibitory effect. The activity of this enzyme is not controlled by adenylation. Probably involved in nitrogen metabolism via ammonium assimilation. Catalyzes the ATP-dependent biosynthesis of glutamine from glutamate and ammonia. The chain is Glutamine synthetase from Sulfolobus acidocaldarius (strain ATCC 33909 / DSM 639 / JCM 8929 / NBRC 15157 / NCIMB 11770).